We begin with the raw amino-acid sequence, 637 residues long: Chaperone protein HtpG (637 aa).

Residues 1-348 (MAEAGQMEKH…SNDLPLNVSR (348 aa)) are a; substrate-binding. The interval 349-565 (EILQDNKITR…DNDMSTQMAK (217 aa)) is b. The tract at residues 566 to 637 (LMEAAGQAVP…TRLNKLMLNA (72 aa)) is c.

This sequence belongs to the heat shock protein 90 family. Homodimer.

The protein resides in the cytoplasm. Its function is as follows. Molecular chaperone. Has ATPase activity. The polypeptide is Chaperone protein HtpG (Idiomarina loihiensis (strain ATCC BAA-735 / DSM 15497 / L2-TR)).